The primary structure comprises 414 residues: WW domain-containing oxidoreductase (414 aa).

The tract at residues 1-23 is disordered; the sequence is MAALKYAGLEDTDSEEELPPGWE. The 34-residue stretch at 16 to 49 folds into the WW 1 domain; sequence EELPPGWEERTTKDGWVYYANHLEEKTQWEHPKS. A Nuclear localization signal motif is present at residues 50–55; sequence GKRKRV. The 34-residue stretch at 57–90 folds into the WW 2 domain; it reads GGLPYGWEQETDENGQVYFVDHINKRTTYLDPRL. NADP(+) is bound at residue 131-137; it reads GANSGIG. Position 260 (serine 260) interacts with substrate. Catalysis depends on tyrosine 293, which acts as the Proton acceptor.

Belongs to the short-chain dehydrogenases/reductases (SDR) family.

Its subcellular location is the cytoplasm. It is found in the mitochondrion. The protein resides in the golgi apparatus. It localises to the lysosome. Functionally, putative oxidoreductase. Acts as a tumor suppressor and plays a role in apoptosis. May function synergistically with p53/TP53 to control genotoxic stress-induced cell death. Plays a role in TGFB1 signaling and TGFB1-mediated cell death. May also play a role in tumor necrosis factor (TNF)-mediated cell death. Required for normal bone development. Inhibits Wnt signaling. This Gallus gallus (Chicken) protein is WW domain-containing oxidoreductase (WWOX).